We begin with the raw amino-acid sequence, 116 residues long: Large ribosomal subunit protein bL19 (116 aa).

This sequence belongs to the bacterial ribosomal protein bL19 family.

Its function is as follows. This protein is located at the 30S-50S ribosomal subunit interface and may play a role in the structure and function of the aminoacyl-tRNA binding site. The polypeptide is Large ribosomal subunit protein bL19 (Staphylococcus epidermidis (strain ATCC 35984 / DSM 28319 / BCRC 17069 / CCUG 31568 / BM 3577 / RP62A)).